Consider the following 225-residue polypeptide: Orotate phosphoribosyltransferase (225 aa).

Lys32 contacts 5-phospho-alpha-D-ribose 1-diphosphate. Residue 40 to 41 coordinates orotate; it reads FF. 5-phospho-alpha-D-ribose 1-diphosphate is bound by residues 78–79, Arg104, Lys105, Lys108, His110, and 129–137; these read YK and DDVISAGTS. Orotate contacts are provided by Ser133 and Arg161.

It belongs to the purine/pyrimidine phosphoribosyltransferase family. PyrE subfamily. Homodimer. Mg(2+) is required as a cofactor.

The enzyme catalyses orotidine 5'-phosphate + diphosphate = orotate + 5-phospho-alpha-D-ribose 1-diphosphate. The protein operates within pyrimidine metabolism; UMP biosynthesis via de novo pathway; UMP from orotate: step 1/2. Catalyzes the transfer of a ribosyl phosphate group from 5-phosphoribose 1-diphosphate to orotate, leading to the formation of orotidine monophosphate (OMP). This Cupriavidus metallidurans (strain ATCC 43123 / DSM 2839 / NBRC 102507 / CH34) (Ralstonia metallidurans) protein is Orotate phosphoribosyltransferase.